We begin with the raw amino-acid sequence, 769 residues long: Probable protease Ga0334635_1659 (769 aa).

A disordered region spans residues 118-167 (VARGSSDNNGAPPLSFTLSHGDPKSDPEPSSPSRLVNTGLSEAERPESPL).

Functionally, probably a dedicated protease for substrate gasdermin bGSDM; cleaves the bGSDM precursor, releasing the pore-forming moiety, which integrates into the membrane and triggers cell death. Involved in defense against bacteriophages. Expression of gasdermin bGSDM and this neighboring protease is toxic in E.coli. The protein is Probable protease Ga0334635_1659 of Vitiosangium sp. (strain GDMCC 1.1324).